The primary structure comprises 441 residues: MCCALGPGGEPSCKDDRVRHDDVFRLNEPRRVAVLAVHTSPLAQPGTGDAGGMNVYVLQTALHLARRGIEVEIFTRATASADPPVQRVAPGVLVRNVVAGPFEGLDKYDLPTQLCAFAAGVLRAEASHEPGYYDIVHSHYWLSGQVGWLARDRWAVPLVHTAHTLAAVKNAALAQGDSPEPPLRTVGEQQVVDEADRLIVNTDDEARQLISIHHADPARIDVVHPGVDLDVFRPGDRRAARAALGLPLDKDIVAFVGRIQPLKAPDIVLRAAAKLPGVRIVVAGGPSGTGLASPDGLARLADELGISARVTFLPPQSRPNLATLFQAANLVAVPSYSESFGLVALEAQACGTPVAAAAVGGLPVAVRDGVTGTLVAGHDVDHWADALAGLLRAPAPAAAAMSRAAAAHAATFSWDHTTDALLASYRRAIREYTTERRGVGA.

His-38 lines the 1D-myo-inositol 3-phosphate pocket. UDP-N-acetyl-alpha-D-glucosamine contacts are provided by residues 44-45 (QP) and Gly-52. 1D-myo-inositol 3-phosphate-binding positions include 49 to 54 (DAGGMN), Lys-107, Tyr-140, Thr-164, and Arg-184. UDP-N-acetyl-alpha-D-glucosamine contacts are provided by Arg-258, Lys-263, and Gln-316. Residues Phe-325, Gln-326, and Ala-328 each coordinate Mg(2+). Residues Glu-338 and Glu-346 each contribute to the UDP-N-acetyl-alpha-D-glucosamine site. Mg(2+) is bound at residue Thr-352.

The protein belongs to the glycosyltransferase group 1 family. MshA subfamily. Homodimer.

The catalysed reaction is 1D-myo-inositol 3-phosphate + UDP-N-acetyl-alpha-D-glucosamine = 1D-myo-inositol 2-acetamido-2-deoxy-alpha-D-glucopyranoside 3-phosphate + UDP + H(+). Functionally, catalyzes the transfer of a N-acetyl-glucosamine moiety to 1D-myo-inositol 3-phosphate to produce 1D-myo-inositol 2-acetamido-2-deoxy-glucopyranoside 3-phosphate in the mycothiol biosynthesis pathway. This chain is D-inositol 3-phosphate glycosyltransferase, found in Mycolicibacterium paratuberculosis (strain ATCC BAA-968 / K-10) (Mycobacterium paratuberculosis).